A 689-amino-acid chain; its full sequence is DNA ligase (689 aa).

Residues 35-39 (DEVYD), 84-85 (SL), and Glu122 contribute to the NAD(+) site. Lys124 (N6-AMP-lysine intermediate) is an active-site residue. NAD(+) contacts are provided by Arg145, Glu182, Lys308, and Lys332. The Zn(2+) site is built by Cys426, Cys429, Cys444, and Cys449. A BRCT domain is found at 612-689 (TTEKSLNGKR…NETELIQMCR (78 aa)).

The protein belongs to the NAD-dependent DNA ligase family. LigA subfamily. Mg(2+) serves as cofactor. It depends on Mn(2+) as a cofactor.

It catalyses the reaction NAD(+) + (deoxyribonucleotide)n-3'-hydroxyl + 5'-phospho-(deoxyribonucleotide)m = (deoxyribonucleotide)n+m + AMP + beta-nicotinamide D-nucleotide.. DNA ligase that catalyzes the formation of phosphodiester linkages between 5'-phosphoryl and 3'-hydroxyl groups in double-stranded DNA using NAD as a coenzyme and as the energy source for the reaction. It is essential for DNA replication and repair of damaged DNA. The polypeptide is DNA ligase (Thermosynechococcus vestitus (strain NIES-2133 / IAM M-273 / BP-1)).